The primary structure comprises 96 residues: Co-chaperonin GroES (96 aa).

The protein belongs to the GroES chaperonin family. Heptamer of 7 subunits arranged in a ring. Interacts with the chaperonin GroEL.

The protein localises to the cytoplasm. Together with the chaperonin GroEL, plays an essential role in assisting protein folding. The GroEL-GroES system forms a nano-cage that allows encapsulation of the non-native substrate proteins and provides a physical environment optimized to promote and accelerate protein folding. GroES binds to the apical surface of the GroEL ring, thereby capping the opening of the GroEL channel. In Allochromatium vinosum (Chromatium vinosum), this protein is Co-chaperonin GroES.